A 214-amino-acid polypeptide reads, in one-letter code: Urease accessory protein UreG (214 aa).

23–30 is a GTP binding site; it reads GPVGSGKT.

The protein belongs to the SIMIBI class G3E GTPase family. UreG subfamily. As to quaternary structure, homodimer. UreD, UreF and UreG form a complex that acts as a GTP-hydrolysis-dependent molecular chaperone, activating the urease apoprotein by helping to assemble the nickel containing metallocenter of UreC. The UreE protein probably delivers the nickel.

The protein localises to the cytoplasm. Functionally, facilitates the functional incorporation of the urease nickel metallocenter. This process requires GTP hydrolysis, probably effectuated by UreG. The protein is Urease accessory protein UreG of Bordetella pertussis (strain Tohama I / ATCC BAA-589 / NCTC 13251).